The chain runs to 299 residues: tRNA pseudouridine synthase B (299 aa).

Asp-49 acts as the Nucleophile in catalysis. In terms of domain architecture, PUA spans 241 to 299 (MPRVTVSGRAAARVLHGVAPAVRVEHPDGTTVAVVAANGALLALAEADGGGLRLRKVFG).

Belongs to the pseudouridine synthase TruB family. Type 1 subfamily.

The enzyme catalyses uridine(55) in tRNA = pseudouridine(55) in tRNA. Responsible for synthesis of pseudouridine from uracil-55 in the psi GC loop of transfer RNAs. The protein is tRNA pseudouridine synthase B of Symbiobacterium thermophilum (strain DSM 24528 / JCM 14929 / IAM 14863 / T).